The chain runs to 1521 residues: Suppressor of Ty 6 homolog (1521 aa).

The segment at 1 to 238 (MDFIDNQAEE…EEIIEDDGEG (238 aa)) is disordered. Positions 26 to 41 (KKMKMAKEKSKRKKKM) are enriched in basic residues. The Nuclear localization signal signature appears at 26–42 (KKMKMAKEKSKRKKKMV). 2 stretches are compositionally biased toward acidic residues: residues 45–56 (SDEDEDDDDDEE) and 67–76 (ADDDDEEEDA). The segment covering 77-89 (KSEKSEKSRHSGE) has biased composition (basic and acidic residues). Positions 90-99 (DELDDEDLDL) are enriched in acidic residues. Positions 126–157 (PIRRPNHEDDDLLSERGSDDGDRRKDRGRGDR) are enriched in basic and acidic residues. 3 stretches are compositionally biased toward acidic residues: residues 166–176 (RSEDDFIEDDG), 191–200 (NLPEGAEDDA), and 209–238 (FNLDEFYDDDDGEDGLEDEEEEIIEDDGEG). The S1 motif domain occupies 1183 to 1252 (LGDSRQGGCP…ERFSLFLSCK (70 aa)). Residues 1300–1389 (HPNFHNVSYE…IARFVQPMIQ (90 aa)) form the SH2 domain.

It belongs to the SPT6 family. As to quaternary structure, interacts with glp-1 and lin-12. As to expression, abundant in embryos, and less abundant in larvae.

Its subcellular location is the nucleus. Histone H3-H4 chaperone that plays a role in maintenance of chromatin structure during RNA polymerase II transcription elongation. Required for several aspects of morphogenesis of C.elegans, including regulation of division in the germline and gut and specification of ventral-uterine precursor cell fate. This is Suppressor of Ty 6 homolog (emb-5) from Caenorhabditis elegans.